A 276-amino-acid chain; its full sequence is NAD kinase (276 aa).

Aspartate 61 acts as the Proton acceptor in catalysis. Residues 61-62 (DG), 134-135 (ND), arginine 145, lysine 162, aspartate 164, valine 172, 175-180 (TAYSFS), and glutamine 234 contribute to the NAD(+) site.

Belongs to the NAD kinase family. A divalent metal cation is required as a cofactor.

It localises to the cytoplasm. The enzyme catalyses NAD(+) + ATP = ADP + NADP(+) + H(+). Functionally, involved in the regulation of the intracellular balance of NAD and NADP, and is a key enzyme in the biosynthesis of NADP. Catalyzes specifically the phosphorylation on 2'-hydroxyl of the adenosine moiety of NAD to yield NADP. This is NAD kinase from Clostridium perfringens (strain 13 / Type A).